Consider the following 61-residue polypeptide: Aerolysin regulatory protein (61 aa).

A compositionally biased stretch (basic residues) spans 1–14 (MMIKRHLPQPRHRE). Residues 1–61 (MMIKRHLPQP…GQTHTGPQIR (61 aa)) form a disordered region. Positions 51–61 (DGQTHTGPQIR) are enriched in polar residues.

Its function is as follows. Regulation of the expression of aerolysin. This Aeromonas sobria protein is Aerolysin regulatory protein (aerC).